The following is a 157-amino-acid chain: Cyclic pyranopterin monophosphate synthase (157 aa).

Substrate contacts are provided by residues methionine 74–histidine 76 and methionine 112–glutamate 113. Aspartate 127 is a catalytic residue.

It belongs to the MoaC family. As to quaternary structure, homohexamer; trimer of dimers.

It catalyses the reaction (8S)-3',8-cyclo-7,8-dihydroguanosine 5'-triphosphate = cyclic pyranopterin phosphate + diphosphate. It participates in cofactor biosynthesis; molybdopterin biosynthesis. Functionally, catalyzes the conversion of (8S)-3',8-cyclo-7,8-dihydroguanosine 5'-triphosphate to cyclic pyranopterin monophosphate (cPMP). The chain is Cyclic pyranopterin monophosphate synthase from Campylobacter lari (strain RM2100 / D67 / ATCC BAA-1060).